We begin with the raw amino-acid sequence, 371 residues long: DNA primase DnaG (371 aa).

Positions 173–248 constitute a Toprim domain; that stretch reads DEIILVEGRA…DIDYVAVAPP (76 aa). Mg(2+)-binding residues include Glu179, Asp221, and Asp223.

The protein belongs to the archaeal DnaG primase family. Forms a ternary complex with MCM helicase and DNA. Component of the archaeal exosome complex. Mg(2+) is required as a cofactor.

The catalysed reaction is ssDNA + n NTP = ssDNA/pppN(pN)n-1 hybrid + (n-1) diphosphate.. RNA polymerase that catalyzes the synthesis of short RNA molecules used as primers for DNA polymerase during DNA replication. Also part of the exosome, which is a complex involved in RNA degradation. Acts as a poly(A)-binding protein that enhances the interaction between heteromeric, adenine-rich transcripts and the exosome. The chain is DNA primase DnaG from Nanoarchaeum equitans (strain Kin4-M).